The primary structure comprises 266 residues: Hydroxypyruvate/pyruvate aldolase (266 aa).

The Proton acceptor role is filled by H48. A divalent metal cation contacts are provided by E152 and D178.

The protein belongs to the HpcH/HpaI aldolase family. A divalent metal cation serves as cofactor.

The catalysed reaction is D-glyceraldehyde + pyruvate = 2-dehydro-3-deoxy-L-galactonate. It carries out the reaction 2-dehydro-3-deoxy-D-gluconate = D-glyceraldehyde + pyruvate. Aldolase which can catalyze in vitro the aldolisation reaction between hydroxypyruvate (HPA) or pyruvate (PA) and D-glyceraldehyde (D-GA). The condensation of pyruvate and D-glyceraldehyde produces 2-dehydro-3-deoxy-L-galactonate as the major product and 2-dehydro-3-deoxy-D-gluconate. Has weak activity with hydroxypyruvate and D-glyceraldehyde. This Agrobacterium fabrum (strain C58 / ATCC 33970) (Agrobacterium tumefaciens (strain C58)) protein is Hydroxypyruvate/pyruvate aldolase.